A 110-amino-acid polypeptide reads, in one-letter code: Large ribosomal subunit protein uL22 (110 aa).

This sequence belongs to the universal ribosomal protein uL22 family. As to quaternary structure, part of the 50S ribosomal subunit.

In terms of biological role, this protein binds specifically to 23S rRNA; its binding is stimulated by other ribosomal proteins, e.g. L4, L17, and L20. It is important during the early stages of 50S assembly. It makes multiple contacts with different domains of the 23S rRNA in the assembled 50S subunit and ribosome. Functionally, the globular domain of the protein is located near the polypeptide exit tunnel on the outside of the subunit, while an extended beta-hairpin is found that lines the wall of the exit tunnel in the center of the 70S ribosome. In Pseudoalteromonas translucida (strain TAC 125), this protein is Large ribosomal subunit protein uL22.